Consider the following 137-residue polypeptide: Small ribosomal subunit protein uS12 (137 aa).

2 disordered regions span residues 1–21 and 33–57; these read MPTI…KSKS and KVQT…TPRK. At aspartate 102 the chain carries 3-methylthioaspartic acid.

It belongs to the universal ribosomal protein uS12 family. Part of the 30S ribosomal subunit. Contacts proteins S8 and S17. May interact with IF1 in the 30S initiation complex.

In terms of biological role, with S4 and S5 plays an important role in translational accuracy. Interacts with and stabilizes bases of the 16S rRNA that are involved in tRNA selection in the A site and with the mRNA backbone. Located at the interface of the 30S and 50S subunits, it traverses the body of the 30S subunit contacting proteins on the other side and probably holding the rRNA structure together. The combined cluster of proteins S8, S12 and S17 appears to hold together the shoulder and platform of the 30S subunit. This is Small ribosomal subunit protein uS12 from Streptococcus pneumoniae (strain ATCC 700669 / Spain 23F-1).